Here is a 148-residue protein sequence, read N- to C-terminus: Cytochrome c oxidase subunit 4, mitochondrial (148 aa).

The transit peptide at 1 to 24 (MFALRSIRSATKAFQTTSIVSQRG) directs the protein to the mitochondrion.

Slime mold cytochrome c oxidase consists of at least seven different polypeptides species, subunits I, II, III, IV, V, VI, and VIIe/s in order of MW.

It is found in the mitochondrion inner membrane. The catalysed reaction is 4 Fe(II)-[cytochrome c] + O2 + 8 H(+)(in) = 4 Fe(III)-[cytochrome c] + 2 H2O + 4 H(+)(out). This protein is one of the nuclear-coded polypeptide chains of cytochrome c oxidase, the terminal oxidase in mitochondrial electron transport. The chain is Cytochrome c oxidase subunit 4, mitochondrial (cxdA) from Dictyostelium discoideum (Social amoeba).